Here is a 101-residue protein sequence, read N- to C-terminus: Protein Tat (101 aa).

The tract at residues M1–N24 is interaction with human CREBBP. Positions M1–G48 are transactivation. 3 residues coordinate Zn(2+): C22, C25, and C27. Positions C22–C37 are cysteine-rich. Position 28 is an N6-acetyllysine; by host PCAF (K28). 4 residues coordinate Zn(2+): C30, H33, C34, and C37. Residues F38–G48 form a core region. Positions Y47–D101 are disordered. A compositionally biased stretch (basic residues) spans G48–A58. Positions R49 to R57 match the Nuclear localization signal, RNA-binding (TAR), and protein transduction motif. Residues R49–E86 form an interaction with the host capping enzyme RNGTT region. N6-acetyllysine; by host EP300 and GCN5L2 is present on residues K50 and K51. 2 positions are modified to asymmetric dimethylarginine; by host PRMT6: R52 and R53. A compositionally biased stretch (polar residues) spans D61–G79. Residue K71 forms a Glycyl lysine isopeptide (Lys-Gly) (interchain with G-Cter in ubiquitin) linkage. A Cell attachment site motif is present at residues R78–D80. A compositionally biased stretch (basic and acidic residues) spans G83–D101.

This sequence belongs to the lentiviruses Tat family. Interacts with host CCNT1. Associates with the P-TEFb complex composed at least of Tat, P-TEFb (CDK9 and CCNT1), TAR RNA, RNA Pol II. Recruits the HATs CREBBP, TAF1/TFIID, EP300, PCAF and GCN5L2. Interacts with host KAT5/Tip60; this interaction targets the latter to degradation. Interacts with the host deacetylase SIRT1. Interacts with host capping enzyme RNGTT; this interaction stimulates RNGTT. Binds to host KDR, and to the host integrins ITGAV/ITGB3 and ITGA5/ITGB1. Interacts with host KPNB1/importin beta-1 without previous binding to KPNA1/importin alpha-1. Interacts with EIF2AK2. Interacts with host nucleosome assembly protein NAP1L1; this interaction may be required for the transport of Tat within the nucleus, since the two proteins interact at the nuclear rim. Interacts with host C1QBP/SF2P32; this interaction involves lysine-acetylated Tat. Interacts with the host chemokine receptors CCR2, CCR3 and CXCR4. Interacts with host DPP4/CD26; this interaction may trigger an anti-proliferative effect. Interacts with host LDLR. Interacts with the host extracellular matrix metalloproteinase MMP1. Interacts with host PRMT6; this interaction mediates Tat's methylation. Interacts with, and is ubiquitinated by MDM2/Hdm2. Interacts with host PSMC3 and HTATIP2. Interacts with STAB1; this interaction may overcome SATB1-mediated repression of IL2 and IL2RA (interleukin) in T cells by binding to the same domain than HDAC1. Interacts (when acetylated) with human CDK13, thereby increasing HIV-1 mRNA splicing and promoting the production of the doubly spliced HIV-1 protein Nef. Interacts with host TBP; this interaction modulates the activity of transcriptional pre-initiation complex. Interacts with host RELA. Interacts with host PLSCR1; this interaction negatively regulates Tat transactivation activity by altering its subcellular distribution. In terms of processing, asymmetrical arginine methylation by host PRMT6 seems to diminish the transactivation capacity of Tat and affects the interaction with host CCNT1. Post-translationally, acetylation by EP300, CREBBP, GCN5L2/GCN5 and PCAF regulates the transactivation activity of Tat. EP300-mediated acetylation of Lys-50 promotes dissociation of Tat from the TAR RNA through the competitive binding to PCAF's bromodomain. In addition, the non-acetylated Tat's N-terminus can also interact with PCAF. PCAF-mediated acetylation of Lys-28 enhances Tat's binding to CCNT1. Lys-50 is deacetylated by SIRT1. Polyubiquitination by host MDM2 does not target Tat to degradation, but activates its transactivation function and fosters interaction with CCNT1 and TAR RNA. In terms of processing, phosphorylated by EIF2AK2 on serine and threonine residues adjacent to the basic region important for TAR RNA binding and function. Phosphorylation of Tat by EIF2AK2 is dependent on the prior activation of EIF2AK2 by dsRNA.

The protein resides in the host nucleus. The protein localises to the host nucleolus. It is found in the host cytoplasm. It localises to the secreted. Functionally, transcriptional activator that increases RNA Pol II processivity, thereby increasing the level of full-length viral transcripts. Recognizes a hairpin structure at the 5'-LTR of the nascent viral mRNAs referred to as the transactivation responsive RNA element (TAR) and recruits the cyclin T1-CDK9 complex (P-TEFb complex) that will in turn hyperphosphorylate the RNA polymerase II to allow efficient elongation. The CDK9 component of P-TEFb and other Tat-activated kinases hyperphosphorylate the C-terminus of RNA Pol II that becomes stabilized and much more processive. Other factors such as HTATSF1/Tat-SF1, SUPT5H/SPT5, and HTATIP2 are also important for Tat's function. Besides its effect on RNA Pol II processivity, Tat induces chromatin remodeling of proviral genes by recruiting the histone acetyltransferases (HATs) CREBBP, EP300 and PCAF to the chromatin. This also contributes to the increase in proviral transcription rate, especially when the provirus integrates in transcriptionally silent region of the host genome. To ensure maximal activation of the LTR, Tat mediates nuclear translocation of NF-kappa-B by interacting with host RELA. Through its interaction with host TBP, Tat may also modulate transcription initiation. Tat can reactivate a latently infected cell by penetrating in it and transactivating its LTR promoter. In the cytoplasm, Tat is thought to act as a translational activator of HIV-1 mRNAs. In terms of biological role, extracellular circulating Tat can be endocytosed by surrounding uninfected cells via the binding to several surface receptors such as CD26, CXCR4, heparan sulfate proteoglycans (HSPG) or LDLR. Neurons are rarely infected, but they internalize Tat via their LDLR. Through its interaction with nuclear HATs, Tat is potentially able to control the acetylation-dependent cellular gene expression. Modulates the expression of many cellular genes involved in cell survival, proliferation or in coding for cytokines or cytokine receptors. Tat plays a role in T-cell and neurons apoptosis. Tat induced neurotoxicity and apoptosis probably contribute to neuroAIDS. Circulating Tat also acts as a chemokine-like and/or growth factor-like molecule that binds to specific receptors on the surface of the cells, affecting many cellular pathways. In the vascular system, Tat binds to ITGAV/ITGB3 and ITGA5/ITGB1 integrins dimers at the surface of endothelial cells and competes with bFGF for heparin-binding sites, leading to an excess of soluble bFGF. The sequence is that of Protein Tat from Homo sapiens (Human).